A 346-amino-acid chain; its full sequence is Glycerol-1-phosphate dehydrogenase [NAD(P)+] (346 aa).

NAD(+) is bound by residues 93–97 (GSIID) and 115–118 (TTAS). D120 provides a ligand contact to substrate. S124 provides a ligand contact to NAD(+). D167 is a binding site for substrate. Residues D167 and H247 each contribute to the Zn(2+) site. H251 lines the substrate pocket. Zn(2+) is bound at residue H263.

It belongs to the glycerol-1-phosphate dehydrogenase family. Zn(2+) serves as cofactor.

The protein resides in the cytoplasm. It catalyses the reaction sn-glycerol 1-phosphate + NAD(+) = dihydroxyacetone phosphate + NADH + H(+). It carries out the reaction sn-glycerol 1-phosphate + NADP(+) = dihydroxyacetone phosphate + NADPH + H(+). The protein operates within membrane lipid metabolism; glycerophospholipid metabolism. Functionally, catalyzes the NAD(P)H-dependent reduction of dihydroxyacetonephosphate (DHAP or glycerone phosphate) to glycerol 1-phosphate (G1P). The G1P thus generated is used as the glycerophosphate backbone of phospholipids in the cellular membranes of Archaea. This Pyrococcus abyssi (strain GE5 / Orsay) protein is Glycerol-1-phosphate dehydrogenase [NAD(P)+].